The chain runs to 123 residues: NADH-quinone oxidoreductase subunit A (123 aa).

Helical transmembrane passes span 11–31 (YLPI…IMML), 68–88 (LVAI…PWAI), and 93–113 (IGKI…IGFI).

The protein belongs to the complex I subunit 3 family. In terms of assembly, NDH-1 is composed of 14 different subunits. Subunits NuoA, H, J, K, L, M, N constitute the membrane sector of the complex.

It is found in the cell inner membrane. The enzyme catalyses a quinone + NADH + 5 H(+)(in) = a quinol + NAD(+) + 4 H(+)(out). Its function is as follows. NDH-1 shuttles electrons from NADH, via FMN and iron-sulfur (Fe-S) centers, to quinones in the respiratory chain. The immediate electron acceptor for the enzyme in this species is believed to be ubiquinone. Couples the redox reaction to proton translocation (for every two electrons transferred, four hydrogen ions are translocated across the cytoplasmic membrane), and thus conserves the redox energy in a proton gradient. The sequence is that of NADH-quinone oxidoreductase subunit A from Rickettsia typhi (strain ATCC VR-144 / Wilmington).